The primary structure comprises 167 residues: Fluoride-specific ion channel FluC (167 aa).

Helical transmembrane passes span 32–52 (HVTP…GALA), 69–89 (IGTL…IAYV), 102–122 (FMIT…AELF), and 137–157 (LGLH…TIGL). Residues Gly109 and Ser112 each coordinate Na(+).

Belongs to the fluoride channel Fluc/FEX (TC 1.A.43) family.

It is found in the cell inner membrane. The enzyme catalyses fluoride(in) = fluoride(out). Its activity is regulated as follows. Na(+) is not transported, but it plays an essential structural role and its presence is essential for fluoride channel function. Its function is as follows. Fluoride-specific ion channel. Important for reducing fluoride concentration in the cell, thus reducing its toxicity. This Xanthomonas oryzae pv. oryzae (strain KACC10331 / KXO85) protein is Fluoride-specific ion channel FluC.